Reading from the N-terminus, the 364-residue chain is MALTLEELVKRFGGEIAGDAQCKVGGLAPLDQAGPQQLAFLANPKYLSQVESTRAGAVLIAPKDLEKLGAAAQGRTAGPRNFIVTPNPYAYFARVAQMFIDLATPPRAAGVHPSATIDPAAKVAATAVIGPHVTIEAGAVIEDGVQLDANVFVGRGTTIGAGSHFYPNASVYHGCKVGPRAIVHAGAVIGSDGFGFAPDFVGDGDARTGSWVKIPQVGGVTIGPDVEIGANTTIDRGAMADTVIEECVKIDNQVQIGHNCRIGAYTVIAGSAGIAGSTTIGRHCMIGGAAGIAGHVTLGDYVIITAKSGVSKSLPKAGIYTSAFPAVDHGEWNKSAALVRNLDKLRERIKALEAALAAQGGTDA.

His258 (proton acceptor) is an active-site residue.

This sequence belongs to the transferase hexapeptide repeat family. LpxD subfamily. In terms of assembly, homotrimer.

The catalysed reaction is a UDP-3-O-[(3R)-3-hydroxyacyl]-alpha-D-glucosamine + a (3R)-hydroxyacyl-[ACP] = a UDP-2-N,3-O-bis[(3R)-3-hydroxyacyl]-alpha-D-glucosamine + holo-[ACP] + H(+). It participates in bacterial outer membrane biogenesis; LPS lipid A biosynthesis. Its function is as follows. Catalyzes the N-acylation of UDP-3-O-acylglucosamine using 3-hydroxyacyl-ACP as the acyl donor. Is involved in the biosynthesis of lipid A, a phosphorylated glycolipid that anchors the lipopolysaccharide to the outer membrane of the cell. This chain is UDP-3-O-acylglucosamine N-acyltransferase, found in Burkholderia orbicola (strain AU 1054).